Here is a 231-residue protein sequence, read N- to C-terminus: 2-C-methyl-D-erythritol 4-phosphate cytidylyltransferase (231 aa).

Belongs to the IspD/TarI cytidylyltransferase family. IspD subfamily.

The enzyme catalyses 2-C-methyl-D-erythritol 4-phosphate + CTP + H(+) = 4-CDP-2-C-methyl-D-erythritol + diphosphate. It functions in the pathway isoprenoid biosynthesis; isopentenyl diphosphate biosynthesis via DXP pathway; isopentenyl diphosphate from 1-deoxy-D-xylulose 5-phosphate: step 2/6. Catalyzes the formation of 4-diphosphocytidyl-2-C-methyl-D-erythritol from CTP and 2-C-methyl-D-erythritol 4-phosphate (MEP). The sequence is that of 2-C-methyl-D-erythritol 4-phosphate cytidylyltransferase from Xylella fastidiosa (strain 9a5c).